The chain runs to 491 residues: Cyclin-A1-3 (491 aa).

The span at 1–21 shows a compositional bias: low complexity; that stretch reads MSSSLASRRSSSSSAAKRPAA. Disordered regions lie at residues 1–32 and 69–106; these read MSSSLASRRSSSSSAAKRPAAGEGGGKAAAGA and SLASGRNVGTNRVSAVKSASTKPASAISRHESAPQKES. A compositionally biased stretch (polar residues) spans 75-91; sequence NVGTNRVSAVKSASTKP.

The protein belongs to the cyclin family. Cyclin AB subfamily.

The polypeptide is Cyclin-A1-3 (CYCA1-3) (Oryza sativa subsp. japonica (Rice)).